Reading from the N-terminus, the 552-residue chain is Scaffold protein (552 aa).

Belongs to the poxviridae protein D13 family. As to quaternary structure, homotrimer. Self-assembles to form a layer. Interacts with A17 (via N-terminus); this interaction is necessary for D13 association with membranes.

The protein localises to the membrane. Scaffold protein which forms a transitory spherical honeycomb lattice providing curvature and rigidity to the convex membrane of crescent and immature virions (IV). This association occurs concomitantly with viral membrane formation. Targeted by the drug rifampicin, which prevents the formation of this lattice, and hence virus morphogenesis. In the presence of rifampicin, irregularly shaped membranes that lack the honeycomb layer accumulate around areas of electron-dense viroplasm. This layer is lost from virions during maturation from IV to mature virion (MV), through the proteolysis of A17 N-terminus. The protein is Scaffold protein of Vertebrata (FPV).